Consider the following 324-residue polypeptide: Acetyl-coenzyme A carboxylase carboxyl transferase subunit alpha (324 aa).

A CoA carboxyltransferase C-terminal domain is found at 41-291 (RLDRLKEKIY…QEYVLQEWLK (251 aa)).

The protein belongs to the AccA family. Acetyl-CoA carboxylase is a heterohexamer composed of biotin carboxyl carrier protein (AccB), biotin carboxylase (AccC) and two subunits each of ACCase subunit alpha (AccA) and ACCase subunit beta (AccD).

The protein localises to the cytoplasm. It carries out the reaction N(6)-carboxybiotinyl-L-lysyl-[protein] + acetyl-CoA = N(6)-biotinyl-L-lysyl-[protein] + malonyl-CoA. It participates in lipid metabolism; malonyl-CoA biosynthesis; malonyl-CoA from acetyl-CoA: step 1/1. Its function is as follows. Component of the acetyl coenzyme A carboxylase (ACC) complex. First, biotin carboxylase catalyzes the carboxylation of biotin on its carrier protein (BCCP) and then the CO(2) group is transferred by the carboxyltransferase to acetyl-CoA to form malonyl-CoA. This is Acetyl-coenzyme A carboxylase carboxyl transferase subunit alpha from Chlamydia muridarum (strain MoPn / Nigg).